The chain runs to 81 residues: Dermaseptin-S6 (81 aa).

An N-terminal signal peptide occupies residues methionine 1–serine 22. The interval serine 22–serine 49 is disordered. The propeptide occupies glutamate 23–arginine 45. Over residues glutamate 30–serine 41 the composition is skewed to acidic residues. The residue at position 78 (isoleucine 78) is an Isoleucine amide. A propeptide spanning residues glutamate 80–glutamine 81 is cleaved from the precursor.

The protein belongs to the frog skin active peptide (FSAP) family. Dermaseptin subfamily. In terms of tissue distribution, expressed by the skin glands.

The protein resides in the secreted. Antimicrobial peptide. This chain is Dermaseptin-S6, found in Phyllomedusa sauvagei (Sauvage's leaf frog).